Consider the following 510-residue polypeptide: NAD(P)H-quinone oxidoreductase subunit 2 A, chloroplastic (510 aa).

The next 13 membrane-spanning stretches (helical) occupy residues 24–44, 57–77, 99–119, 124–144, 149–169, 183–203, 227–247, 295–315, 323–343, 354–374, 395–415, 418–438, and 482–502; these read LLLFDGSFIFPECILIFGLIL, MPWLYFISSTSLVMSITALLF, IFQFLILLCSTLCIPLSVEYI, MAITEFLLFVLTATLGGMFLC, LITIFVAPECFSLCSYLLSGY, YLLMGGASSSILVHGFSWLYG, PGISIALIFITVGIGFKLSPA, WHLLLEILAILSMIVGNLIAI, MLAYSSIGQIGYVIIGIIVGD, YMLFYISMNLGTFACIVLFGL, ALSLALCLLSLGGLPPLAGFF, LHLFWCGWQAGLYFLVSIGLL, and LSMIVCVIASTIPGISMSPII.

It belongs to the complex I subunit 2 family. In terms of assembly, NDH is composed of at least 16 different subunits, 5 of which are encoded in the nucleus.

The protein localises to the plastid. It is found in the chloroplast thylakoid membrane. It catalyses the reaction a plastoquinone + NADH + (n+1) H(+)(in) = a plastoquinol + NAD(+) + n H(+)(out). It carries out the reaction a plastoquinone + NADPH + (n+1) H(+)(in) = a plastoquinol + NADP(+) + n H(+)(out). Its function is as follows. NDH shuttles electrons from NAD(P)H:plastoquinone, via FMN and iron-sulfur (Fe-S) centers, to quinones in the photosynthetic chain and possibly in a chloroplast respiratory chain. The immediate electron acceptor for the enzyme in this species is believed to be plastoquinone. Couples the redox reaction to proton translocation, and thus conserves the redox energy in a proton gradient. The protein is NAD(P)H-quinone oxidoreductase subunit 2 A, chloroplastic of Populus trichocarpa (Western balsam poplar).